A 283-amino-acid chain; its full sequence is ATP phosphoribosyltransferase (283 aa).

Belongs to the ATP phosphoribosyltransferase family. Long subfamily. In terms of assembly, equilibrium between an active dimeric form, an inactive hexameric form and higher aggregates. Interconversion between the various forms is largely reversible and is influenced by the natural substrates and inhibitors of the enzyme. Mg(2+) is required as a cofactor.

It localises to the cytoplasm. The catalysed reaction is 1-(5-phospho-beta-D-ribosyl)-ATP + diphosphate = 5-phospho-alpha-D-ribose 1-diphosphate + ATP. It functions in the pathway amino-acid biosynthesis; L-histidine biosynthesis; L-histidine from 5-phospho-alpha-D-ribose 1-diphosphate: step 1/9. Feedback inhibited by histidine. In terms of biological role, catalyzes the condensation of ATP and 5-phosphoribose 1-diphosphate to form N'-(5'-phosphoribosyl)-ATP (PR-ATP). Has a crucial role in the pathway because the rate of histidine biosynthesis seems to be controlled primarily by regulation of HisG enzymatic activity. This is ATP phosphoribosyltransferase from Mycobacterium sp. (strain KMS).